A 105-amino-acid polypeptide reads, in one-letter code: Large ribosomal subunit protein uL24 (105 aa).

This sequence belongs to the universal ribosomal protein uL24 family. In terms of assembly, part of the 50S ribosomal subunit.

In terms of biological role, one of two assembly initiator proteins, it binds directly to the 5'-end of the 23S rRNA, where it nucleates assembly of the 50S subunit. Functionally, one of the proteins that surrounds the polypeptide exit tunnel on the outside of the subunit. In Clostridium kluyveri (strain ATCC 8527 / DSM 555 / NBRC 12016 / NCIMB 10680 / K1), this protein is Large ribosomal subunit protein uL24.